A 206-amino-acid polypeptide reads, in one-letter code: Large ribosomal subunit protein uL3 (206 aa).

A disordered region spans residues 127–151; the sequence is SGGPSSHGSKFHRHLGGTGQATTPA.

The protein belongs to the universal ribosomal protein uL3 family. Part of the 50S ribosomal subunit. Forms a cluster with proteins L14 and L19.

In terms of biological role, one of the primary rRNA binding proteins, it binds directly near the 3'-end of the 23S rRNA, where it nucleates assembly of the 50S subunit. In Borreliella burgdorferi (strain ATCC 35210 / DSM 4680 / CIP 102532 / B31) (Borrelia burgdorferi), this protein is Large ribosomal subunit protein uL3.